Here is a 386-residue protein sequence, read N- to C-terminus: Centrosomal protein of 44 kDa (386 aa).

Positions 11 to 194 are binds with microtubules and centrioles; the sequence is RKLEQVLRSL…GVPEGTVTST (184 aa). The stretch at 232-262 forms a coiled coil; that stretch reads ELTALQIALAECQEKLKKLTWIEKRLECLEA. Residue S329 is modified to Phosphoserine. Residues 359 to 382 are a coiled coil; that stretch reads SEETTMQKMERMKKMFEETAELLK.

In terms of assembly, interacts with CROCC. Interacts with POC1B; the interaction is direct and recruits POC1B to centriolar microtubules. Binds to centriolar microtubules.

The protein localises to the cytoplasm. The protein resides in the cytoskeleton. It localises to the microtubule organizing center. It is found in the centrosome. Its subcellular location is the centriole. The protein localises to the spindle pole. The protein resides in the midbody. In terms of biological role, centriole-enriched microtubule-binding protein involved in centriole biogenesis. In collaboration with CEP295 and POC1B, is required for the centriole-to-centrosome conversion by ensuring the formation of bona fide centriole wall. Functions as a linker component that maintains centrosome cohesion. Associates with CROCC and regulates its stability and localization to the centrosome. The protein is Centrosomal protein of 44 kDa (Cep44) of Rattus norvegicus (Rat).